The chain runs to 487 residues: Putative beta-glucosidase 35 (487 aa).

Positions 1–27 are cleaved as a signal peptide; it reads MGIRMGRRLLLITLLLGALLCNNVAYA. Residue glutamine 48 coordinates a beta-D-glucoside. Asparagine 76 and asparagine 116 each carry an N-linked (GlcNAc...) asparagine glycan. Residues histidine 151 and 200-201 contribute to the a beta-D-glucoside site; that span reads NE. Residue glutamate 201 is the Proton donor of the active site. Cysteine 220 and cysteine 228 are oxidised to a cystine. Tyrosine 344 contacts a beta-D-glucoside. Asparagine 369 is a glycosylation site (N-linked (GlcNAc...) asparagine). Glutamate 414 serves as a coordination point for a beta-D-glucoside. Catalysis depends on glutamate 414, which acts as the Nucleophile. Residues asparagine 418 and asparagine 419 are each glycosylated (N-linked (GlcNAc...) asparagine). Residue phenylalanine 458 participates in a beta-D-glucoside binding.

Belongs to the glycosyl hydrolase 1 family.

It carries out the reaction Hydrolysis of terminal, non-reducing beta-D-glucosyl residues with release of beta-D-glucose.. The chain is Putative beta-glucosidase 35 (BGLU35) from Oryza sativa subsp. japonica (Rice).